We begin with the raw amino-acid sequence, 160 residues long: Putative 4-hydroxy-4-methyl-2-oxoglutarate aldolase (160 aa).

Substrate contacts are provided by residues 75–78 (GDLI) and Arg-97. Asp-98 contacts a divalent metal cation.

The protein belongs to the class II aldolase/RraA-like family. In terms of assembly, homotrimer. It depends on a divalent metal cation as a cofactor.

It carries out the reaction 4-hydroxy-4-methyl-2-oxoglutarate = 2 pyruvate. The catalysed reaction is oxaloacetate + H(+) = pyruvate + CO2. In terms of biological role, catalyzes the aldol cleavage of 4-hydroxy-4-methyl-2-oxoglutarate (HMG) into 2 molecules of pyruvate. Also contains a secondary oxaloacetate (OAA) decarboxylase activity due to the common pyruvate enolate transition state formed following C-C bond cleavage in the retro-aldol and decarboxylation reactions. The protein is Putative 4-hydroxy-4-methyl-2-oxoglutarate aldolase of Rhodospirillum centenum (strain ATCC 51521 / SW).